The sequence spans 862 residues: DNA mismatch repair protein MutS (862 aa).

603 to 610 contacts ATP; it reads GPNMSGKS.

Belongs to the DNA mismatch repair MutS family.

In terms of biological role, this protein is involved in the repair of mismatches in DNA. It is possible that it carries out the mismatch recognition step. This protein has a weak ATPase activity. The polypeptide is DNA mismatch repair protein MutS (Bacillus velezensis (strain DSM 23117 / BGSC 10A6 / LMG 26770 / FZB42) (Bacillus amyloliquefaciens subsp. plantarum)).